A 224-amino-acid polypeptide reads, in one-letter code: Large ribosomal subunit protein bL25 (224 aa).

Residues 195-224 (TVEEVDEAAEVDAADVPATEQGTDESKDGE) form a disordered region. Residues 197–207 (EEVDEAAEVDA) are compositionally biased toward acidic residues.

Belongs to the bacterial ribosomal protein bL25 family. CTC subfamily. As to quaternary structure, part of the 50S ribosomal subunit; part of the 5S rRNA/L5/L18/L25 subcomplex. Contacts the 5S rRNA. Binds to the 5S rRNA independently of L5 and L18.

This is one of the proteins that binds to the 5S RNA in the ribosome where it forms part of the central protuberance. This chain is Large ribosomal subunit protein bL25, found in Psychrobacter cryohalolentis (strain ATCC BAA-1226 / DSM 17306 / VKM B-2378 / K5).